Here is a 568-residue protein sequence, read N- to C-terminus: 2-succinyl-5-enolpyruvyl-6-hydroxy-3-cyclohexene-1-carboxylate synthase (568 aa).

Belongs to the TPP enzyme family. MenD subfamily. As to quaternary structure, homodimer. Requires Mg(2+) as cofactor. Mn(2+) serves as cofactor. It depends on thiamine diphosphate as a cofactor.

The enzyme catalyses isochorismate + 2-oxoglutarate + H(+) = 5-enolpyruvoyl-6-hydroxy-2-succinyl-cyclohex-3-ene-1-carboxylate + CO2. Its pathway is quinol/quinone metabolism; 1,4-dihydroxy-2-naphthoate biosynthesis; 1,4-dihydroxy-2-naphthoate from chorismate: step 2/7. The protein operates within quinol/quinone metabolism; menaquinone biosynthesis. Functionally, catalyzes the thiamine diphosphate-dependent decarboxylation of 2-oxoglutarate and the subsequent addition of the resulting succinic semialdehyde-thiamine pyrophosphate anion to isochorismate to yield 2-succinyl-5-enolpyruvyl-6-hydroxy-3-cyclohexene-1-carboxylate (SEPHCHC). The protein is 2-succinyl-5-enolpyruvyl-6-hydroxy-3-cyclohexene-1-carboxylate synthase of Histophilus somni (strain 2336) (Haemophilus somnus).